Consider the following 243-residue polypeptide: MSRPVRNRKVVDYSQFQESDDADEDYGRDSGPPAKKIRSSPREAKNKRRSGKNSQEDSEDSEEKDVKTKKDDSHSAEDSEDEKDDHKSVRQQRQAASKAASKQREMLLEDVGSEEEPEEDDEAPFQEKDSGSDEDFLMEDDDDSDYGSSKKKNKKMVKKSKPERKEKKMPKPRLKATVTPSPVKGKGKVGRPTASKTSKEKTPSPKEEDEEAESPPEKKTSASPPLEKSGDEGSEDEAASGED.

A disordered region spans residues 1–243; it reads MSRPVRNRKV…SEDEAASGED (243 aa). Residue Tyr-13 is modified to Phosphotyrosine. Phosphoserine occurs at positions 14 and 19. Tyr-26 carries the post-translational modification Phosphotyrosine. Basic residues predominate over residues 35 to 51; it reads KKIRSSPREAKNKRRSG. Phosphoserine is present on residues Ser-54, Ser-58, Ser-61, Ser-73, Ser-75, and Ser-79. The span at 64-77 shows a compositional bias: basic and acidic residues; that stretch reads KDVKTKKDDSHSAE. Low complexity predominate over residues 91–100; it reads QQRQAASKAA. The span at 111 to 124 shows a compositional bias: acidic residues; sequence VGSEEEPEEDDEAP. Phosphoserine is present on residues Ser-113, Ser-130, Ser-132, and Ser-144. Positions 132–145 are enriched in acidic residues; that stretch reads SDEDFLMEDDDDSD. Residues 149 to 174 are compositionally biased toward basic residues; that stretch reads SKKKNKKMVKKSKPERKEKKMPKPRL. At Thr-179 the chain carries Phosphothreonine. At Ser-181 the chain carries Phosphoserine. Positions 197–206 are enriched in basic and acidic residues; it reads TSKEKTPSPK. Phosphothreonine is present on Thr-202. 6 positions are modified to phosphoserine: Ser-204, Ser-214, Ser-223, Ser-229, Ser-234, and Ser-240. Residues 232-243 show a composition bias toward acidic residues; sequence EGSEDEAASGED.

Does not interact with RAD51. Post-translationally, phosphorylated in an ATM-dependent manner in response to DNA damage. Phosphorylated by CDK1 and casein kinase.

It is found in the nucleus. The protein localises to the chromosome. Chromatin-associated protein involved in DNA repair by promoting homologous recombination (HR). Binds double-stranded DNA (dsDNA) and secondary DNA structures, such as D-loop structures, but with less affinity than RAD51AP1. In Rattus norvegicus (Rat), this protein is Nuclear ubiquitous casein and cyclin-dependent kinase substrate 1.